The chain runs to 243 residues: 1-(5-phosphoribosyl)-5-[(5-phosphoribosylamino)methylideneamino] imidazole-4-carboxamide isomerase (243 aa).

Residue Asp-8 is the Proton acceptor of the active site. Asp-130 acts as the Proton donor in catalysis.

Belongs to the HisA/HisF family.

It is found in the cytoplasm. The enzyme catalyses 1-(5-phospho-beta-D-ribosyl)-5-[(5-phospho-beta-D-ribosylamino)methylideneamino]imidazole-4-carboxamide = 5-[(5-phospho-1-deoxy-D-ribulos-1-ylimino)methylamino]-1-(5-phospho-beta-D-ribosyl)imidazole-4-carboxamide. Its pathway is amino-acid biosynthesis; L-histidine biosynthesis; L-histidine from 5-phospho-alpha-D-ribose 1-diphosphate: step 4/9. This Saccharophagus degradans (strain 2-40 / ATCC 43961 / DSM 17024) protein is 1-(5-phosphoribosyl)-5-[(5-phosphoribosylamino)methylideneamino] imidazole-4-carboxamide isomerase.